We begin with the raw amino-acid sequence, 31 residues long: Cytochrome b6-f complex subunit 6 (31 aa).

Residues 4–24 (ITSYFGFLLAALTITSAIFIG) traverse the membrane as a helical segment.

The protein belongs to the PetL family. As to quaternary structure, the 4 large subunits of the cytochrome b6-f complex are cytochrome b6, subunit IV (17 kDa polypeptide, PetD), cytochrome f and the Rieske protein, while the 4 small subunits are PetG, PetL, PetM and PetN. The complex functions as a dimer.

Its subcellular location is the plastid. It localises to the chloroplast thylakoid membrane. In terms of biological role, component of the cytochrome b6-f complex, which mediates electron transfer between photosystem II (PSII) and photosystem I (PSI), cyclic electron flow around PSI, and state transitions. PetL is important for photoautotrophic growth as well as for electron transfer efficiency and stability of the cytochrome b6-f complex. This is Cytochrome b6-f complex subunit 6 from Ficus carica (Common fig).